A 197-amino-acid polypeptide reads, in one-letter code: Large ribosomal subunit protein uL10 (197 aa).

A disordered region spans residues G162–N197. The span at G163–N197 shows a compositional bias: low complexity.

Belongs to the universal ribosomal protein uL10 family. In terms of assembly, part of the ribosomal stalk of the 50S ribosomal subunit. The N-terminus interacts with L11 and the large rRNA to form the base of the stalk. The C-terminus forms an elongated spine to which L12 dimers bind in a sequential fashion forming a multimeric L10(L12)X complex.

Forms part of the ribosomal stalk, playing a central role in the interaction of the ribosome with GTP-bound translation factors. This is Large ribosomal subunit protein uL10 from Paenarthrobacter aurescens (strain TC1).